We begin with the raw amino-acid sequence, 382 residues long: ATP phosphoribosyltransferase regulatory subunit (382 aa).

The protein belongs to the class-II aminoacyl-tRNA synthetase family. HisZ subfamily. Heteromultimer composed of HisG and HisZ subunits.

It is found in the cytoplasm. It functions in the pathway amino-acid biosynthesis; L-histidine biosynthesis; L-histidine from 5-phospho-alpha-D-ribose 1-diphosphate: step 1/9. Required for the first step of histidine biosynthesis. May allow the feedback regulation of ATP phosphoribosyltransferase activity by histidine. This Verminephrobacter eiseniae (strain EF01-2) protein is ATP phosphoribosyltransferase regulatory subunit.